We begin with the raw amino-acid sequence, 315 residues long: uncharacterized protein (315 aa).

This is an uncharacterized protein from Bos taurus (Bovine).